The sequence spans 366 residues: MQTLKVDLGERSYPIHIGEGLLDQPELLAPHIHGRQVAIISNETVAPLYLERLTRSLAQFSVVSVVLPDGEAFKNWETLQLIFDGLLTARHDRRTTVIALGGGVIGDMAGFAAACYQRGVDFIQIPTTLLSQVDSSVGGKTGINHPLGKNMVGAFYQPNVVLIDTASLKTLPARELSAGLAEVIKYGLICDEPFLTWLEDNVDALRALDQTALTYAIERSCAAKAAVVGADEKETGVRATLNLGHTFGHAIETHMGYGVWLHGEAVAAGTVMALEMSARLGWISEQERDRGIRLFQRAGLPVIPPEEMTEADFLEHMAIDKKVIDGRLRLVLLRRMGEAVVTDDYPKEVLQATLGADYRALAQLKG.

NAD(+)-binding positions include 69–74, 103–107, 127–128, Lys-140, and Lys-149; these read DGEAFK, GVIGD, and TT. Positions 182, 245, and 262 each coordinate Zn(2+).

Belongs to the sugar phosphate cyclases superfamily. Dehydroquinate synthase family. The cofactor is Co(2+). Zn(2+) is required as a cofactor. Requires NAD(+) as cofactor.

Its subcellular location is the cytoplasm. It carries out the reaction 7-phospho-2-dehydro-3-deoxy-D-arabino-heptonate = 3-dehydroquinate + phosphate. The protein operates within metabolic intermediate biosynthesis; chorismate biosynthesis; chorismate from D-erythrose 4-phosphate and phosphoenolpyruvate: step 2/7. In terms of biological role, catalyzes the conversion of 3-deoxy-D-arabino-heptulosonate 7-phosphate (DAHP) to dehydroquinate (DHQ). This is 3-dehydroquinate synthase from Pseudomonas fluorescens (strain Pf0-1).